Reading from the N-terminus, the 290-residue chain is Signal recognition particle receptor subunit beta (290 aa).

The helical transmembrane segment at 44-64 threads the bilayer; that stretch reads VLLLALFTLIFIIIISKLFGS. Residues 92–100, 114–117, Gly-140, and Ala-268 contribute to the GTP site; these read GLSNAGKTA and THTS.

Belongs to the SRP receptor beta subunit family. As to quaternary structure, heterodimer of an alpha and a beta chain.

Its subcellular location is the endoplasmic reticulum membrane. In terms of biological role, component of the signal recognition particle (SRP) complex receptor (SR). Ensures, in conjunction with the SRP complex, the correct targeting of the nascent secretory proteins to the endoplasmic reticulum membrane system. May mediate the membrane association of SR. This Dictyostelium discoideum (Social amoeba) protein is Signal recognition particle receptor subunit beta (srprb).